Consider the following 62-residue polypeptide: Large ribosomal subunit protein uL30 (62 aa).

Belongs to the universal ribosomal protein uL30 family. As to quaternary structure, part of the 50S ribosomal subunit.

The chain is Large ribosomal subunit protein uL30 from Shewanella frigidimarina (strain NCIMB 400).